We begin with the raw amino-acid sequence, 481 residues long: uncharacterized protein (481 aa).

11 consecutive transmembrane segments (helical) span residues Leu14–Leu34, Phe46–Ala66, Ile90–Ala110, Phe134–Phe154, Thr167–Thr187, Phe218–Ile238, Ile258–Gly278, Ile303–Ala323, Leu377–Ala397, Ala411–Ser431, and Tyr446–His466.

Belongs to the amino acid-polyamine-organocation (APC) superfamily.

The protein resides in the cell membrane. In terms of biological role, probable amino-acid or metabolite transport protein. This is an uncharacterized protein from Mycobacterium tuberculosis (strain CDC 1551 / Oshkosh).